Consider the following 346-residue polypeptide: Porin Omp2a (346 aa).

Residues 1–22 form the signal peptide; the sequence is MNIKSLLLGSAAALVAASGAQA.

It belongs to the alphaproteobacteria porin family. As to quaternary structure, monomer.

It is found in the cell outer membrane. Its function is as follows. Forms passive diffusion pores that allow small molecular weight hydrophilic materials across the outer membrane. This is Porin Omp2a (omp2a) from Brucella ovis.